A 94-amino-acid polypeptide reads, in one-letter code: MTKDRRAALVRITGRVQGVCFRDWTREEAEKLGLDGWVRNESDGSVTALIAGPDGAVSRMLENFWKGPPGASIADVASEVASSVEAPAGFRITR.

Residues 7-94 (AALVRITGRV…EAPAGFRITR (88 aa)) enclose the Acylphosphatase-like domain. Active-site residues include R22 and N40.

It belongs to the acylphosphatase family.

The catalysed reaction is an acyl phosphate + H2O = a carboxylate + phosphate + H(+). This chain is Acylphosphatase (acyP), found in Sinorhizobium medicae (strain WSM419) (Ensifer medicae).